A 259-amino-acid chain; its full sequence is Thiazole synthase (259 aa).

K98 (schiff-base intermediate with DXP) is an active-site residue. Residues G159, 185–186, and 207–208 contribute to the 1-deoxy-D-xylulose 5-phosphate site; these read AG and NS.

It belongs to the ThiG family. As to quaternary structure, homotetramer. Forms heterodimers with either ThiH or ThiS.

Its subcellular location is the cytoplasm. The catalysed reaction is [ThiS sulfur-carrier protein]-C-terminal-Gly-aminoethanethioate + 2-iminoacetate + 1-deoxy-D-xylulose 5-phosphate = [ThiS sulfur-carrier protein]-C-terminal Gly-Gly + 2-[(2R,5Z)-2-carboxy-4-methylthiazol-5(2H)-ylidene]ethyl phosphate + 2 H2O + H(+). Its pathway is cofactor biosynthesis; thiamine diphosphate biosynthesis. Its function is as follows. Catalyzes the rearrangement of 1-deoxy-D-xylulose 5-phosphate (DXP) to produce the thiazole phosphate moiety of thiamine. Sulfur is provided by the thiocarboxylate moiety of the carrier protein ThiS. In vitro, sulfur can be provided by H(2)S. The sequence is that of Thiazole synthase from Chlorobaculum tepidum (strain ATCC 49652 / DSM 12025 / NBRC 103806 / TLS) (Chlorobium tepidum).